Here is a 244-residue protein sequence, read N- to C-terminus: Mediator of RNA polymerase II transcription subunit 19 (244 aa).

Disordered regions lie at residues 1 to 67 (MENF…PFYL) and 171 to 244 (PKKK…SSLR). The span at 26–38 (GKPPPPPPPPPGG) shows a compositional bias: pro residues. Residues 44–55 (PPSTATSAPAGA) are compositionally biased toward low complexity. The span at 171–182 (PKKKNKHKHKQS) shows a compositional bias: basic residues. S194 carries the post-translational modification Phosphoserine. Basic residues predominate over residues 212–224 (KRKKKEKKKKKNR). S226 bears the Phosphoserine mark. Residues 234-244 (SSQASSSSSLR) are compositionally biased toward low complexity.

Belongs to the Mediator complex subunit 19 family. Component of the Mediator complex, which is composed of MED1, MED4, MED6, MED7, MED8, MED9, MED10, MED11, MED12, MED13, MED13L, MED14, MED15, MED16, MED17, MED18, MED19, MED20, MED21, MED22, MED23, MED24, MED25, MED26, MED27, MED29, MED30, MED31, CCNC, CDK8 and CDC2L6/CDK11. The MED12, MED13, CCNC and CDK8 subunits form a distinct module termed the CDK8 module. Mediator containing the CDK8 module is less active than Mediator lacking this module in supporting transcriptional activation. Individual preparations of the Mediator complex lacking one or more distinct subunits have been variously termed ARC, CRSP, DRIP, PC2, SMCC and TRAP.

The protein resides in the nucleus. Component of the Mediator complex, a coactivator involved in the regulated transcription of nearly all RNA polymerase II-dependent genes. Mediator functions as a bridge to convey information from gene-specific regulatory proteins to the basal RNA polymerase II transcription machinery. Mediator is recruited to promoters by direct interactions with regulatory proteins and serves as a scaffold for the assembly of a functional preinitiation complex with RNA polymerase II and the general transcription factors. This chain is Mediator of RNA polymerase II transcription subunit 19 (Med19), found in Mus musculus (Mouse).